The chain runs to 348 residues: Farnesoic acid carboxyl-O-methyltransferase (348 aa).

Position 16 (Tyr-16) interacts with S-adenosyl-L-methionine. Substrate contacts are provided by residues Tyr-16 and 19–23; that span reads HSKYQ. Residues Gly-57, 57–58, Asn-63, 94–97, 123–125, and 140–142 contribute to the S-adenosyl-L-methionine site; these read GC, FNDS, SFF, and SYS. A substrate-binding site is contributed by 141-145; that stretch reads YSLHF. The Mg(2+) site is built by Asn-162, Asp-247, and Phe-249.

Belongs to the methyltransferase superfamily. SABATH family. In terms of assembly, homodimer. The cofactor is Mg(2+). As to expression, mostly expressed in leaves and, at very low levels, in roots, stems, flowers and siliques.

The enzyme catalyses (2E,6E)-farnesoate + S-adenosyl-L-methionine = methyl (2E,6E)-farnesoate + S-adenosyl-L-homocysteine. The catalysed reaction is juvenile hormone III carboxylate + S-adenosyl-L-methionine = juvenile hormone III + S-adenosyl-L-homocysteine. It participates in sesquiterpene biosynthesis. Its activity is regulated as follows. Activated by Mn(2+) ions. Strongly inhibited by Cu(2+), Zn(2+), Fe(3+) and Fe(2+) ions. Moderately inhibited by Na(+) and Ca(2+) ions. Rapidly degraded at temperatures above 40 degrees Celsius. May catalyze the production of the insect juvenile hormone methyl farnesoate (MeFA) to trigger defense against insect herbivory. This is Farnesoic acid carboxyl-O-methyltransferase from Arabidopsis thaliana (Mouse-ear cress).